The chain runs to 191 residues: Protein Ves (191 aa).

Belongs to the Ves family.

This Escherichia coli O139:H28 (strain E24377A / ETEC) protein is Protein Ves.